A 400-amino-acid chain; its full sequence is MNAPLHPLKQPSMLRQLLATEAAGGVLLMFTAALAIIIANSPWASAYQHLLHLPVGPVLTDKLGPMTVHMWINDGLMAIFFLLVGLEIKRELVDGRLASWEQRRLPALPALMGMAVPALIYLAVSRGELGLAGGWAIPAATDIAFAVGALALLGKHAPLSLKVMLVSVAIIDDMGAVAIIAVFYTSSINLLALAGAAGIVAVLLAFNRLRVVALWPYLIGVAALWYVTLLSGVHATIAGVVGALLIPYSAGSGAEREASPLLKLEHGLAPWVGFLIVPAFGFANAGVSFGDLGWSDIFAPLPLAIALGLLLGKQLGVFAGVLLAVKSGLASKPRGASWLQIYGVAMLCGIGFTMSLFIGELAFPGQPEKIDAAKIGILLGSLLSAVIACVILRFAPKQAD.

12 helical membrane-spanning segments follow: residues 18–38 (LATEAAGGVLLMFTAALAIII), 68–88 (VHMWINDGLMAIFFLLVGLEI), 105–125 (LPALPALMGMAVPALIYLAVS), 133–153 (GGWAIPAATDIAFAVGALALL), 163–183 (VMLVSVAIIDDMGAVAIIAVF), 186–206 (SSINLLALAGAAGIVAVLLAF), 211–231 (VVALWPYLIGVAALWYVTLLS), 232–252 (GVHATIAGVVGALLIPYSAGS), 267–287 (GLAPWVGFLIVPAFGFANAGV), 305–325 (IALGLLLGKQLGVFAGVLLAV), 338–358 (WLQIYGVAMLCGIGFTMSLFI), and 372–392 (AAKIGILLGSLLSAVIACVIL).

This sequence belongs to the NhaA Na(+)/H(+) (TC 2.A.33) antiporter family.

Its subcellular location is the cell inner membrane. It catalyses the reaction Na(+)(in) + 2 H(+)(out) = Na(+)(out) + 2 H(+)(in). Functionally, na(+)/H(+) antiporter that extrudes sodium in exchange for external protons. This is Na(+)/H(+) antiporter NhaA from Pseudomonas entomophila (strain L48).